The chain runs to 476 residues: Glycogen synthase (476 aa).

K15 provides a ligand contact to ADP-alpha-D-glucose.

The protein belongs to the glycosyltransferase 1 family. Bacterial/plant glycogen synthase subfamily.

The enzyme catalyses [(1-&gt;4)-alpha-D-glucosyl](n) + ADP-alpha-D-glucose = [(1-&gt;4)-alpha-D-glucosyl](n+1) + ADP + H(+). It participates in glycan biosynthesis; glycogen biosynthesis. Its function is as follows. Synthesizes alpha-1,4-glucan chains using ADP-glucose. The polypeptide is Glycogen synthase (Bacillus cereus (strain ATCC 14579 / DSM 31 / CCUG 7414 / JCM 2152 / NBRC 15305 / NCIMB 9373 / NCTC 2599 / NRRL B-3711)).